Consider the following 263-residue polypeptide: Serine protease ami (263 aa).

The first 21 residues, 1-21 (MNISRVLFAVVLVLTVSTYEC), serve as a signal peptide directing secretion. N2 is a glycosylation site (N-linked (GlcNAc...) asparagine). A propeptide spans 22–26 (RPRGR) (activation peptide). Residues 27–254 (ILGGQDSKEK…YKSWIMETMY (228 aa)) form the Peptidase S1 domain. The cysteines at positions 52 and 68 are disulfide-linked. H67 serves as the catalytic Charge relay system. 3 N-linked (GlcNAc...) asparagine glycosylation sites follow: N73, N74, and N108. D115 functions as the Charge relay system in the catalytic mechanism. 3 disulfides stabilise this stretch: C149-C215, C180-C196, and C205-C230. S209 functions as the Charge relay system in the catalytic mechanism. The N-linked (GlcNAc...) asparagine glycan is linked to N255.

The protein belongs to the peptidase S1 family. As to expression, in the embryo, localizes to paraxial regions at the neurula stage and anterior ventral regions at the tailbud stage. From the late tailbud to tadpole stage, expressed along the forming blood vessels including the anterior cardinal veins, posterior cardinal veins, intersomitic veins, dorsal longitudinal anastomosing vessel, dorsal aorta, pronephric sinus and most prominently around the vascular vitelline network, where expression shows left-right asymmetry in the stage 42 embryo. Localizes to endothelial cells. In adults, shows highest expression in liver with moderate levels of expression in the fat body, lung, gut and vessels. Weakly expressed in adult heart, muscle, testis and ovary.

Its subcellular location is the secreted. In terms of biological role, probable serine protease. This Xenopus laevis (African clawed frog) protein is Serine protease ami.